The sequence spans 157 residues: Large ribosomal subunit protein uL15 (157 aa).

A disordered region spans residues 1–64 (MKLNEIPAVP…MPLQRRLPKR (64 aa)). The segment covering 21 to 31 (RGPGSGNGKTA) has biased composition (gly residues).

Belongs to the universal ribosomal protein uL15 family. As to quaternary structure, part of the 50S ribosomal subunit.

In terms of biological role, binds to the 23S rRNA. The chain is Large ribosomal subunit protein uL15 from Magnetococcus marinus (strain ATCC BAA-1437 / JCM 17883 / MC-1).